A 104-amino-acid chain; its full sequence is MTTETLVSGTTPVSDNANLKQHLTTPTQEGQTLRDSVEKALHNYFAHLEGQPVTDVYNMVLCEVEAPLLETVMNHVKGNQTKASELLGLNRGTLRKKLKQYDLL.

The H-T-H motif DNA-binding region spans 80-99; that stretch reads QTKASELLGLNRGTLRKKLK.

The protein belongs to the transcriptional regulatory Fis family.

The chain is Putative Fis-like DNA-binding protein from Pseudomonas aeruginosa (strain ATCC 15692 / DSM 22644 / CIP 104116 / JCM 14847 / LMG 12228 / 1C / PRS 101 / PAO1).